Reading from the N-terminus, the 326-residue chain is Protein-arginine N-acetylglucosaminyltransferase NleB2 (326 aa).

UDP-N-acetyl-alpha-D-glucosamine is bound by residues 45 to 47 (QWF), Tyr69, and 216 to 219 (YLDM). The short motif at 218–220 (DMD) is the DXD motif element. Asp220 provides a ligand contact to Mn(2+). The Proton acceptor role is filled by Glu250. Asn317 and Ser319 together coordinate Mn(2+). Residues Ser319 and 324 to 326 (SSW) contribute to the UDP-N-acetyl-alpha-D-glucosamine site.

This sequence belongs to the glycosyltransferase NleB family. Mn(2+) is required as a cofactor.

It is found in the secreted. The protein localises to the host cell. The enzyme catalyses L-arginyl-[protein] + UDP-N-acetyl-alpha-D-glucosamine = N(omega)-(N-acetyl-beta-D-glucosaminyl)-L-arginyl-[protein] + UDP + H(+). Protein-arginine N-acetylglucosaminyltransferase effector that catalyzes the transfer of a single N-acetylglucosamine (GlcNAc) to a conserved arginine residue of host target proteins. In contrast to NleB1, not able to disrupt TNF signaling in infected cells. Shows a lower enzymatic activity than NleB1. This is Protein-arginine N-acetylglucosaminyltransferase NleB2 from Escherichia coli O127:H6 (strain E2348/69 / EPEC).